We begin with the raw amino-acid sequence, 1239 residues long: MELPNYSRQLLQQLYTLCKEQQFCDCTISIGTIYFRAHKLVLAAASLLFKTLLDNTDTISIDASVVSPEEFALLLEMMYTGKLPVGKHNFSKIISLADSLQMFDVAVSCKNLLTSLVNCSVQGQVVRDVSAPSSETFRKEPEKPQVEILSSEGAGEPHSSPELAATPGGPVKAETEEAAHSVSQEMSVNSPTAQESQRNAETPAETPTTAEACSPSPAVQTFSEAKKTSTEPGCERKHYQLNFLLENEGVFSDALMVTQDVLKKLEMCSEIKGPQKEMIVKCFEGEGGHSAFQRILGKVREESLDVQTVVSLLRLYQYSNPAVKTALLDRKPEDVDTVQPKGSTEEGKTLSVLLLEHKEDLIQCVTQLRPIMESLETAKEEFLTGTEKRVILNCCEGRTPKETIENLLHRMTEEKTLTAEGLVKLLQAVKTTFPNLGLLLEKLQKSATLPSTTVQPSPDDYGTELLRRYHENLSEIFTDNQILLKMISHMTSLAPGEREVMEKLVKRDSGSGGFNSLISAVLEKQTLSATAIWQLLLVVQETKTCPLDLLMEEIRREPGADAFFRAVTTPEHATLETILRHNQLILEAIQQKIEYKLFTSEEEHLAETVKEILSIPSETASPEASLRAVLSRAMEKSVPAIEICHLLCSVHKSFPGLQPVMQELAYIGVLTKEDGEKETWKVSNKFHLEANNKEDEKAAKEDSQPGEQNDQGETGSLPGQQEKEASASPDPAKKSFICKACDKSFHFYCRLKVHMKRCRVAKSKQVQCKECSETKDSKKELDKHQLEAHGAGGEPDAPKKKKKRLPVTCDLCGREFAHASGMQYHKLTEHFDEKPFSCEECGAKFAANSTLKNHLRLHTGDRPFMCKHCLMTFTQASALAYHTKKKHSEGKMYACQYCDAVFAQSIELSRHVRTHTGDKPYVCRDCGKGFRQANGLSIHLHTFHNIEDPYDCKKCRMSFPTLQDHRKHIHEVHSKEYHPCPTCGKIFSAPSMLERHVVTHVGGKPFSCGICNKAYQQLSGLWYHNRTHHPDVFAAQNHRSSKFSSLQCSSCDKTFPNTIEHKKHIKAEHADMKFHECDQCKELFPTPALLQVHVKCQHSGSQPFRCLYCAATFRFPGALQHHVTTEHFKQSETTFPCELCGELFTSQAQLDSHLESEHPKVMSTETQAAASQMAQVIQTPEPVAPTEQVITLEETQLAGSQVFVTLPDSQASQASSELVAVTVEDLLDGTVTLICGEAK.

A BTB domain is found at 24 to 87; the sequence is CDCTISIGTI…MYTGKLPVGK (64 aa). 3 disordered regions span residues 130–231, 687–732, and 779–801; these read SAPS…TSTE, HLEA…PDPA, and KELD…PKKK. Residues 136–145 are compositionally biased toward basic and acidic residues; that stretch reads TFRKEPEKPQ. Residues 181-199 show a composition bias toward polar residues; it reads SVSQEMSVNSPTAQESQRN. The residue at position 190 (Ser-190) is a Phosphoserine. The span at 200–212 shows a compositional bias: low complexity; the sequence is AETPAETPTTAEA. The span at 687–703 shows a compositional bias: basic and acidic residues; the sequence is HLEANNKEDEKAAKEDS. Ser-703 carries the phosphoserine modification. A compositionally biased stretch (polar residues) spans 705 to 719; it reads PGEQNDQGETGSLPG. 10 consecutive C2H2-type zinc fingers follow at residues 807-830, 836-858, 864-887, 893-915, 921-944, 950-973, 978-1000, 1006-1029, 1046-1069, and 1075-1098; these read VTCD…LTEH, FSCE…LRLH, FMCK…KKKH, YACQ…VRTH, YVCR…HTFH, YDCK…HEVH, HPCP…VVTH, FSCG…RTHH, LQCS…KAEH, and HECD…KCQH. Lys-1066 participates in a covalent cross-link: Glycyl lysine isopeptide (Lys-Gly) (interchain with G-Cter in SUMO2). The C2H2-type 11; atypical zinc finger occupies 1104–1127; sequence FRCLYCAATFRFPGALQHHVTTEH. The C2H2-type 12 zinc-finger motif lies at 1135–1158; that stretch reads FPCELCGELFTSQAQLDSHLESEH.

The protein belongs to the krueppel C2H2-type zinc-finger protein family.

It localises to the nucleus. Its function is as follows. May be involved in transcriptional regulation. The polypeptide is Zinc finger and BTB domain-containing protein 40 (ZBTB40) (Homo sapiens (Human)).